The following is a 758-amino-acid chain: 5-methyltetrahydropteroyltriglutamate--homocysteine methyltransferase (758 aa).

Residues 17 to 20 (RELK) and lysine 117 contribute to the 5-methyltetrahydropteroyltri-L-glutamate site. L-homocysteine-binding positions include 434–436 (IGS) and glutamate 487. L-methionine-binding positions include 434–436 (IGS) and glutamate 487. 5-methyltetrahydropteroyltri-L-glutamate is bound by residues 518-519 (RC) and tryptophan 564. Residue aspartate 602 coordinates L-homocysteine. Aspartate 602 contributes to the L-methionine binding site. 5-methyltetrahydropteroyltri-L-glutamate is bound at residue glutamate 608. 3 residues coordinate Zn(2+): histidine 644, cysteine 646, and glutamate 668. Histidine 697 serves as the catalytic Proton donor. Cysteine 729 provides a ligand contact to Zn(2+).

The protein belongs to the vitamin-B12 independent methionine synthase family. The cofactor is Zn(2+).

The enzyme catalyses 5-methyltetrahydropteroyltri-L-glutamate + L-homocysteine = tetrahydropteroyltri-L-glutamate + L-methionine. The protein operates within amino-acid biosynthesis; L-methionine biosynthesis via de novo pathway; L-methionine from L-homocysteine (MetE route): step 1/1. Catalyzes the transfer of a methyl group from 5-methyltetrahydrofolate to homocysteine resulting in methionine formation. The protein is 5-methyltetrahydropteroyltriglutamate--homocysteine methyltransferase of Yersinia pestis (strain Pestoides F).